The chain runs to 81 residues: A-kinase anchor protein 7 isoform alpha (81 aa).

The N-myristoyl glycine moiety is linked to residue G2. The segment at 2-11 (GQLCCFPFAR) is required for membrane localization. S-palmitoyl cysteine attachment occurs at residues C5 and C6. The interval 29–42 (LVRLSKRLVENAVL) is RII-binding. The disordered stretch occupies residues 49 to 81 (LEETQNKKQPGEGNSTKAEEGDRNGDGSDNNRK). Positions 65–81 (KAEEGDRNGDGSDNNRK) are enriched in basic and acidic residues.

Binds cAMP-dependent protein kinase (PKA). Interacts with PRKCA; only the cytoplasmic form is capable of interacting with PRKCA.

It is found in the lateral cell membrane. Functionally, targets the cAMP-dependent protein kinase (PKA) to the plasma membrane, and permits functional coupling to the L-type calcium channel. The membrane-associated form reduces epithelial sodium channel (ENaC) activity, whereas the free cytoplasmic form may negatively regulate ENaC channel feedback inhibition by intracellular sodium. This chain is A-kinase anchor protein 7 isoform alpha (Akap7), found in Mus musculus (Mouse).